Consider the following 748-residue polypeptide: Acetyl-CoA decarbonylase/synthase complex subunit beta 1 (748 aa).

[Ni-Fe-S] cluster-binding residues include C480, C483, C569, and C571.

It belongs to the CdhC family. Monomer. The ACDS complex is made up of alpha, epsilon, beta, gamma and delta chains with a probable stoichiometry of (alpha(2)epsilon(2))(4)-beta(8)-(gamma(1)delta(1))(8) (Potential). The cofactor is [Ni-Fe-S] cluster.

It catalyses the reaction Co(I)-[corrinoid Fe-S protein] + acetyl-CoA + H(+) = methyl-Co(III)-[corrinoid Fe-S protein] + CO + CoA. Its function is as follows. Part of a complex that catalyzes the reversible cleavage of acetyl-CoA, allowing autotrophic growth from CO(2). The alpha-epsilon complex generates CO from CO(2), while the beta subunit (this protein) combines the CO with CoA and a methyl group to form acetyl-CoA. The methyl group, which is incorporated into acetyl-CoA, is transferred to the beta subunit by a corrinoid iron-sulfur protein (the gamma-delta complex). The protein is Acetyl-CoA decarbonylase/synthase complex subunit beta 1 (cdhC1) of Methanocaldococcus jannaschii (strain ATCC 43067 / DSM 2661 / JAL-1 / JCM 10045 / NBRC 100440) (Methanococcus jannaschii).